The following is a 281-amino-acid chain: Protein EMBRYO DEFECTIVE 1674 (281 aa).

Composition is skewed to polar residues over residues 1–14 (MTTT…QSLS) and 24–41 (PNTS…PNSS). Positions 1–47 (MTTTRAKSKFQSLSACRFTPLPEPNTSPSTYSKTLPKPNSSPGTDGT) are disordered. Residues 66–153 (VTLSDWWLTK…LGFPYDWEDY (88 aa)) enclose the SANTA domain.

Required for normal embryo development. The polypeptide is Protein EMBRYO DEFECTIVE 1674 (Arabidopsis thaliana (Mouse-ear cress)).